The sequence spans 455 residues: Bifunctional protein GlmU (455 aa).

Residues 1–226 (MSLDIVILAA…AMEVQGANDR (226 aa)) are pyrophosphorylase. UDP-N-acetyl-alpha-D-glucosamine is bound by residues 8 to 11 (LAAG), lysine 22, glutamine 73, 78 to 79 (GT), 99 to 101 (YGD), glycine 136, glutamate 151, asparagine 166, and asparagine 224. Aspartate 101 is a Mg(2+) binding site. Asparagine 224 provides a ligand contact to Mg(2+). A linker region spans residues 227 to 247 (RQLSELERHYQLREGRRLMAQ). Residues 248–455 (GVTLRDPARF…WKRPEKIKKS (208 aa)) form an N-acetyltransferase region. Arginine 330 and lysine 348 together coordinate UDP-N-acetyl-alpha-D-glucosamine. Histidine 360 serves as the catalytic Proton acceptor. UDP-N-acetyl-alpha-D-glucosamine-binding residues include tyrosine 363 and asparagine 374. Acetyl-CoA contacts are provided by residues alanine 377, 383 to 384 (NY), serine 402, alanine 420, and arginine 437.

The protein in the N-terminal section; belongs to the N-acetylglucosamine-1-phosphate uridyltransferase family. It in the C-terminal section; belongs to the transferase hexapeptide repeat family. In terms of assembly, homotrimer. Requires Mg(2+) as cofactor.

The protein resides in the cytoplasm. The catalysed reaction is alpha-D-glucosamine 1-phosphate + acetyl-CoA = N-acetyl-alpha-D-glucosamine 1-phosphate + CoA + H(+). It catalyses the reaction N-acetyl-alpha-D-glucosamine 1-phosphate + UTP + H(+) = UDP-N-acetyl-alpha-D-glucosamine + diphosphate. It functions in the pathway nucleotide-sugar biosynthesis; UDP-N-acetyl-alpha-D-glucosamine biosynthesis; N-acetyl-alpha-D-glucosamine 1-phosphate from alpha-D-glucosamine 6-phosphate (route II): step 2/2. Its pathway is nucleotide-sugar biosynthesis; UDP-N-acetyl-alpha-D-glucosamine biosynthesis; UDP-N-acetyl-alpha-D-glucosamine from N-acetyl-alpha-D-glucosamine 1-phosphate: step 1/1. The protein operates within bacterial outer membrane biogenesis; LPS lipid A biosynthesis. In terms of biological role, catalyzes the last two sequential reactions in the de novo biosynthetic pathway for UDP-N-acetylglucosamine (UDP-GlcNAc). The C-terminal domain catalyzes the transfer of acetyl group from acetyl coenzyme A to glucosamine-1-phosphate (GlcN-1-P) to produce N-acetylglucosamine-1-phosphate (GlcNAc-1-P), which is converted into UDP-GlcNAc by the transfer of uridine 5-monophosphate (from uridine 5-triphosphate), a reaction catalyzed by the N-terminal domain. This chain is Bifunctional protein GlmU, found in Pseudomonas putida (strain ATCC 700007 / DSM 6899 / JCM 31910 / BCRC 17059 / LMG 24140 / F1).